Here is a 450-residue protein sequence, read N- to C-terminus: UDP-N-acetylmuramoylalanine--D-glutamate ligase (450 aa).

115–121 (GTNGKTT) contacts ATP.

It belongs to the MurCDEF family.

The protein localises to the cytoplasm. It catalyses the reaction UDP-N-acetyl-alpha-D-muramoyl-L-alanine + D-glutamate + ATP = UDP-N-acetyl-alpha-D-muramoyl-L-alanyl-D-glutamate + ADP + phosphate + H(+). It participates in cell wall biogenesis; peptidoglycan biosynthesis. Cell wall formation. Catalyzes the addition of glutamate to the nucleotide precursor UDP-N-acetylmuramoyl-L-alanine (UMA). The chain is UDP-N-acetylmuramoylalanine--D-glutamate ligase from Lachnospira eligens (strain ATCC 27750 / DSM 3376 / VPI C15-48 / C15-B4) (Eubacterium eligens).